Reading from the N-terminus, the 983-residue chain is Inner tegument protein (983 aa).

The tract at residues 474-983 is interaction with large tegument protein; sequence LNVNTHFAVQ…TSVSLPPASP (510 aa). A disordered region spans residues 901–932; it reads APWESAPQPPRLRMTPDTDHEESTAGATSVPE. Residues 914–923 are compositionally biased toward basic and acidic residues; it reads MTPDTDHEES.

It belongs to the herpesviridae inner tegument protein family. As to quaternary structure, interacts (via C-terminus) with the large tegument protein/LTP (via N-terminus).

The protein resides in the virion tegument. It is found in the host cytoplasm. Its subcellular location is the host nucleus. It localises to the host Golgi apparatus. The protein localises to the host trans-Golgi network. In terms of biological role, plays an essential role in cytoplasmic secondary envelopment during viral egress. Interacts with the capsid via the large tegument protein/LTP and participates in its transport to the host trans-Golgi network (TGN) where secondary envelopment occurs. Modulates tegumentation and capsid accumulation at the viral assembly complex. In Homo sapiens (Human), this protein is Inner tegument protein (UL47).